Consider the following 267-residue polypeptide: MKKILLTNDDGYHAKGIKALEQALEKMAEIYVVAPKHEKSACSQCITITAPLRAEKIKGKEGRHYKIDDGTPSDCVYLAINELFKHVCFDLVISGINLGSNMGEDTIYSGTVAGAIEGTIQGVPSIAISQILSHRNKNTPLSFDLAQKIIQDLVQNIFTNGYPLKGRKLLNVNVPNCSLQEYKGECITPKGYRLYKKEVHKRTDPKNESYFWLGLHPLEWQKRENEDRLSDFDAIASNHVSITPLNLDLTSYDDLKNLESWHKGMLK.

Positions 9, 10, 40, and 97 each coordinate a divalent metal cation.

It belongs to the SurE nucleotidase family. It depends on a divalent metal cation as a cofactor.

It localises to the cytoplasm. It catalyses the reaction a ribonucleoside 5'-phosphate + H2O = a ribonucleoside + phosphate. Functionally, nucleotidase that shows phosphatase activity on nucleoside 5'-monophosphates. This Helicobacter pylori (strain Shi470) protein is 5'-nucleotidase SurE.